Here is a 225-residue protein sequence, read N- to C-terminus: UPF0173 metal-dependent hydrolase PAE2160 (225 aa).

This sequence belongs to the UPF0173 family.

In Pyrobaculum aerophilum (strain ATCC 51768 / DSM 7523 / JCM 9630 / CIP 104966 / NBRC 100827 / IM2), this protein is UPF0173 metal-dependent hydrolase PAE2160.